Here is a 135-residue protein sequence, read N- to C-terminus: C-type lectin BPL (135 aa).

4 disulfides stabilise this stretch: C3–C14, C31–C131, C38–C133, and C106–C123. The region spanning 10 to 132 is the C-type lectin domain; the sequence is MNGLCYKIFN…CESKNAFLCQ (123 aa). Q96, D98, E104, and D120 together coordinate Ca(2+). The Galactose-binding motif lies at 96-98; sequence QPD.

Belongs to the true venom lectin family. Homodimer; disulfide-linked. In terms of tissue distribution, expressed by the venom gland.

It localises to the secreted. In terms of biological role, galactose-binding protein which recognizes specific carbohydrate structures and agglutinates a variety of animal cells by binding to cell-surface glycoproteins and glycolipids. Calcium-dependent lectin. Shows high hemagglutinating activity in the presence of human erythrocytes, which are agglutinated with a minimum hemagglutination concentration (MHC) of 2.5-0.35 ug/ml. Causes indirect nephrotoxicity. Causes reductions in perfusion pressures, renal vascular resistance, urinary flow, glomerular filtration rate, sodium, potassium and chloride tubular transport. Its effects may be caused by the release of inflammatory mediators. This is C-type lectin BPL from Bothrops pirajai (Piraja's lancehead).